A 482-amino-acid polypeptide reads, in one-letter code: Glutamyl-tRNA(Gln) amidotransferase subunit A (482 aa).

Active-site charge relay system residues include Lys-81 and Ser-156. The active-site Acyl-ester intermediate is the Ser-180.

Belongs to the amidase family. GatA subfamily. Heterotrimer of A, B and C subunits.

The catalysed reaction is L-glutamyl-tRNA(Gln) + L-glutamine + ATP + H2O = L-glutaminyl-tRNA(Gln) + L-glutamate + ADP + phosphate + H(+). Its function is as follows. Allows the formation of correctly charged Gln-tRNA(Gln) through the transamidation of misacylated Glu-tRNA(Gln) in organisms which lack glutaminyl-tRNA synthetase. The reaction takes place in the presence of glutamine and ATP through an activated gamma-phospho-Glu-tRNA(Gln). The protein is Glutamyl-tRNA(Gln) amidotransferase subunit A of Brachyspira hyodysenteriae (strain ATCC 49526 / WA1).